Reading from the N-terminus, the 25-residue chain is Insulin mimetic protein (25 aa).

The segment at 1-25 (TKDPELKQCKKQQKKQQQYDDDDKK) is disordered.

Glycosylated. As to expression, expressed in seed.

This is Insulin mimetic protein from Cnidoscolus quercifolius.